Consider the following 322-residue polypeptide: Glycerate dehydrogenase (322 aa).

Residues 158 to 159, D178, 239 to 241, and D265 each bind NAD(+); these read SI and TAR. The active site involves R241. E270 is a catalytic residue. The active-site Proton donor is H288. 288 to 291 is a binding site for NAD(+); that stretch reads HIGS.

It belongs to the D-isomer specific 2-hydroxyacid dehydrogenase family. As to quaternary structure, homodimer.

It catalyses the reaction (R)-glycerate + NAD(+) = 3-hydroxypyruvate + NADH + H(+). Its pathway is one-carbon metabolism; formaldehyde assimilation via serine pathway. Its function is as follows. Active on hydroxypyruvate and glyoxylate. This chain is Glycerate dehydrogenase, found in Hyphomicrobium methylovorum.